The following is a 55-amino-acid chain: Large ribosomal subunit protein bL33 (55 aa).

The protein belongs to the bacterial ribosomal protein bL33 family.

The sequence is that of Large ribosomal subunit protein bL33 from Gluconobacter oxydans (strain 621H) (Gluconobacter suboxydans).